We begin with the raw amino-acid sequence, 152 residues long: Transcriptional regulator MraZ (152 aa).

2 SpoVT-AbrB domains span residues 5–52 and 81–124; these read ATLV…PLPA and ASEC…DEQT.

The protein belongs to the MraZ family. As to quaternary structure, forms oligomers.

The protein localises to the cytoplasm. It is found in the nucleoid. In terms of biological role, negatively regulates its own expression and that of the subsequent genes in the proximal part of the division and cell wall (dcw) gene cluster. Acts by binding directly to DNA. May also regulate the expression of genes outside the dcw cluster. The sequence is that of Transcriptional regulator MraZ from Sodalis glossinidius (strain morsitans).